Consider the following 91-residue polypeptide: Small ribosomal subunit protein uS19 (91 aa).

Belongs to the universal ribosomal protein uS19 family.

In terms of biological role, protein S19 forms a complex with S13 that binds strongly to the 16S ribosomal RNA. This Synechococcus elongatus (strain ATCC 33912 / PCC 7942 / FACHB-805) (Anacystis nidulans R2) protein is Small ribosomal subunit protein uS19.